The following is a 245-amino-acid chain: Protein-L-isoaspartate O-methyltransferase 1 (245 aa).

Residue Ser-76 is part of the active site.

It belongs to the methyltransferase superfamily. L-isoaspartyl/D-aspartyl protein methyltransferase family.

It is found in the cytoplasm. It carries out the reaction [protein]-L-isoaspartate + S-adenosyl-L-methionine = [protein]-L-isoaspartate alpha-methyl ester + S-adenosyl-L-homocysteine. Functionally, catalyzes the methyl esterification of L-isoaspartyl residues in peptides and proteins that result from spontaneous decomposition of normal L-aspartyl and L-asparaginyl residues. It plays a role in the repair and/or degradation of damaged proteins. The protein is Protein-L-isoaspartate O-methyltransferase 1 of Rhodopseudomonas palustris (strain HaA2).